The sequence spans 337 residues: Inositol 2-dehydrogenase (337 aa).

This sequence belongs to the Gfo/Idh/MocA family. In terms of assembly, homotetramer.

The enzyme catalyses myo-inositol + NAD(+) = scyllo-inosose + NADH + H(+). Functionally, involved in the oxidation of myo-inositol (MI) to 2-keto-myo-inositol (2KMI or 2-inosose). The protein is Inositol 2-dehydrogenase of Burkholderia multivorans (strain ATCC 17616 / 249).